The sequence spans 118 residues: T cell receptor gamma variable 5 (118 aa).

The first 17 residues, 1 to 17 (MRWALLVLLAFLSPASQ), serve as a signal peptide directing secretion. Residues 18–118 (KSSNLEGGTK…GVYYCATWDR (101 aa)) enclose the Ig-like domain. The cysteines at positions 41 and 113 are disulfide-linked. Asn-106 carries an N-linked (GlcNAc...) asparagine glycan.

As to quaternary structure, gamma-delta TR is a heterodimer composed of a gamma and delta chain; disulfide-linked. The gamma-delta TR is associated with the transmembrane signaling CD3 coreceptor proteins following the stoichiometry: a single gamma-delta TR heterodimer associates with one CD3D-CD3E heterodimer, one CD3G-CD3E heterodimer and one CD247 homodimer forming a stable octameric structure. Upon activation, gamma-delta TR complex associates with FCER1G to initiate intracellular signaling.

It is found in the cell membrane. Functionally, v region of the variable domain of T cell receptor (TR) gamma chain that participates in the antigen recognition. Gamma-delta TRs recognize a variety of self and foreign non-peptide antigens frequently expressed at the epithelial boundaries between the host and external environment, including endogenous lipids presented by MH-like protein CD1D and phosphoantigens presented by butyrophilin-like molecule BTN3A1. Upon antigen recognition induces rapid, innate-like immune responses involved in pathogen clearance and tissue repair. Binding of gamma-delta TR complex to antigen triggers phosphorylation of immunoreceptor tyrosine-based activation motifs (ITAMs) in the CD3 chains by the LCK and FYN kinases, allowing the recruitment, phosphorylation, and activation of ZAP70 that facilitates phosphorylation of the scaffolding proteins LCP2 and LAT. This lead to the formation of a supramolecular signalosome that recruits the phospholipase PLCG1, resulting in calcium mobilization and ERK activation, ultimately leading to T cell expansion and differentiation into effector cells. Gamma-delta TRs are produced through somatic rearrangement of a limited repertoire of variable (V), diversity (D), and joining (J) genes. The potential diversity of gamma-delta TRs is conferred by the unique ability to rearrange (D) genes in tandem and to utilize all three reading frames. The combinatorial diversity is considerably increased by the sequence exonuclease trimming and random nucleotide (N) region additions which occur during the V-(D)-J rearrangements. This is T cell receptor gamma variable 5 from Homo sapiens (Human).